The primary structure comprises 118 residues: Small ribosomal subunit protein uS13 (118 aa).

The tract at residues 94–118 (GLPLRGQRTKTNARTRKGPRKPIRK) is disordered.

This sequence belongs to the universal ribosomal protein uS13 family. Part of the 30S ribosomal subunit. Forms a loose heterodimer with protein S19. Forms two bridges to the 50S subunit in the 70S ribosome.

Its function is as follows. Located at the top of the head of the 30S subunit, it contacts several helices of the 16S rRNA. In the 70S ribosome it contacts the 23S rRNA (bridge B1a) and protein L5 of the 50S subunit (bridge B1b), connecting the 2 subunits; these bridges are implicated in subunit movement. Contacts the tRNAs in the A and P-sites. This Alcanivorax borkumensis (strain ATCC 700651 / DSM 11573 / NCIMB 13689 / SK2) protein is Small ribosomal subunit protein uS13.